The primary structure comprises 132 residues: DNA-directed RNA polymerase subunit omega (132 aa).

Residues E76–T105 form a disordered region.

This sequence belongs to the RNA polymerase subunit omega family. As to quaternary structure, the RNAP catalytic core consists of 2 alpha, 1 beta, 1 beta' and 1 omega subunit. When a sigma factor is associated with the core the holoenzyme is formed, which can initiate transcription.

The enzyme catalyses RNA(n) + a ribonucleoside 5'-triphosphate = RNA(n+1) + diphosphate. Its function is as follows. Promotes RNA polymerase assembly. Latches the N- and C-terminal regions of the beta' subunit thereby facilitating its interaction with the beta and alpha subunits. In Allorhizobium ampelinum (strain ATCC BAA-846 / DSM 112012 / S4) (Agrobacterium vitis (strain S4)), this protein is DNA-directed RNA polymerase subunit omega.